We begin with the raw amino-acid sequence, 307 residues long: Quinolinate synthase (307 aa).

Iminosuccinate contacts are provided by His-20 and Ser-37. Residue Cys-82 participates in [4Fe-4S] cluster binding. Residues 108–110 (YIN) and Ser-125 each bind iminosuccinate. Residue Cys-168 coordinates [4Fe-4S] cluster. Iminosuccinate-binding positions include 194 to 196 (HPE) and Thr-219. Cys-264 serves as a coordination point for [4Fe-4S] cluster.

Belongs to the quinolinate synthase family. Type 2 subfamily. Requires [4Fe-4S] cluster as cofactor.

It is found in the cytoplasm. The enzyme catalyses iminosuccinate + dihydroxyacetone phosphate = quinolinate + phosphate + 2 H2O + H(+). Its pathway is cofactor biosynthesis; NAD(+) biosynthesis; quinolinate from iminoaspartate: step 1/1. In terms of biological role, catalyzes the condensation of iminoaspartate with dihydroxyacetone phosphate to form quinolinate. The chain is Quinolinate synthase from Pyrobaculum aerophilum (strain ATCC 51768 / DSM 7523 / JCM 9630 / CIP 104966 / NBRC 100827 / IM2).